The following is a 122-amino-acid chain: Phospholipase A2 nigroviriditoxin basic subunit B (122 aa).

Intrachain disulfides connect Cys26–Cys115, Cys28–Cys44, Cys43–Cys95, Cys49–Cys122, Cys50–Cys88, Cys57–Cys81, and Cys75–Cys86. Residues Tyr27, Gly29, and Gly31 each coordinate Ca(2+). Residue His47 is part of the active site. Asp48 serves as a coordination point for Ca(2+). Asp89 is a catalytic residue.

This sequence belongs to the phospholipase A2 family. Group II subfamily. D49 sub-subfamily. Nigroviriditoxin is a heterodimer of an acidic subunit A and a basic subunit B. Requires Ca(2+) as cofactor. As to expression, expressed by the venom gland.

The protein localises to the secreted. It catalyses the reaction a 1,2-diacyl-sn-glycero-3-phosphocholine + H2O = a 1-acyl-sn-glycero-3-phosphocholine + a fatty acid + H(+). Functionally, heterodimer A-B: Nigroviriditoxin possesses phospholipase A2 (PLA2) activity. It consists of a non-covalent association of a basic PLA2 subunit B with a non-enzymatic subunit A. Its function is as follows. Subunit B: Snake venom phospholipase A2 (PLA2) that induces myonecrosis in mice. PLA2 catalyzes the calcium-dependent hydrolysis of the 2-acyl groups in 3-sn-phosphoglycerides. In Bothriechis nigroviridis (Black-speckled palm pit viper), this protein is Phospholipase A2 nigroviriditoxin basic subunit B.